The following is a 394-amino-acid chain: Ribulose bisphosphate carboxylase large chain (394 aa).

Position 5 is an N6,N6,N6-trimethyllysine (lysine 5). 2 residues coordinate substrate: asparagine 114 and threonine 164. Lysine 166 functions as the Proton acceptor in the catalytic mechanism. Residue lysine 168 coordinates substrate. 3 residues coordinate Mg(2+): lysine 192, aspartate 194, and glutamate 195. Lysine 192 is subject to N6-carboxylysine. The active-site Proton acceptor is the histidine 285. Positions 286, 318, and 370 each coordinate substrate.

Belongs to the RuBisCO large chain family. Type I subfamily. Heterohexadecamer of 8 large chains and 8 small chains. Mg(2+) is required as a cofactor.

The protein localises to the plastid. Its subcellular location is the chloroplast. The enzyme catalyses 2 (2R)-3-phosphoglycerate + 2 H(+) = D-ribulose 1,5-bisphosphate + CO2 + H2O. It catalyses the reaction D-ribulose 1,5-bisphosphate + O2 = 2-phosphoglycolate + (2R)-3-phosphoglycerate + 2 H(+). Its function is as follows. RuBisCO catalyzes two reactions: the carboxylation of D-ribulose 1,5-bisphosphate, the primary event in carbon dioxide fixation, as well as the oxidative fragmentation of the pentose substrate in the photorespiration process. Both reactions occur simultaneously and in competition at the same active site. In Cabomba caroliniana (Carolina fanwort), this protein is Ribulose bisphosphate carboxylase large chain (rbcL).